The following is a 318-amino-acid chain: Protein-L-histidine N-pros-methyltransferase (318 aa).

The N-terminal stretch at 1–18 (MRLLAGWLCLSLASVWLA) is a signal peptide. Asparagine 35 carries an N-linked (GlcNAc...) asparagine glycan. S-adenosyl-L-homocysteine is bound by residues glutamate 174, asparagine 210, and tyrosine 295.

It belongs to the METTL9 family. Expressed in liver, colon, small intestine, skin, kidney and to a lesser extent in spleen, lung, thymus and stomach. Not detected in fibroblast and endothelial cells.

The protein localises to the endoplasmic reticulum. It localises to the mitochondrion. The catalysed reaction is L-histidyl-[protein] + S-adenosyl-L-methionine = N(pros)-methyl-L-histidyl-[protein] + S-adenosyl-L-homocysteine + H(+). In terms of biological role, protein-histidine N-methyltransferase that specifically catalyzes 1-methylhistidine (pros-methylhistidine) methylation of target proteins. Specifically methylates the second His of proteins with a His-x-His (HxH) motif (where 'x' is preferably a small amino acid), while exploiting the first one as a recognition signature. Catalyzes methylation of target proteins such as S100A9, NDUFB3, SLC39A5, SLC39A7, ARMC6 and DNAJB12; 1-methylhistidine modification may affect the binding of zinc and other metals to its target proteins. Constitutes the main methyltransferase for the 1-methylhistidine modification in cell. The sequence is that of Protein-L-histidine N-pros-methyltransferase from Mus musculus (Mouse).